The chain runs to 356 residues: Carbohydrate sulfotransferase 10 (356 aa).

The Cytoplasmic segment spans residues 1–6 (MHHQWL). Residues 7–27 (LLAACFWVIFMFMVASKFITL) form a helical; Signal-anchor for type II membrane protein membrane-spanning segment. Over 28 to 356 (TFKDPDVYSA…GYQKPDFLLN (329 aa)) the chain is Lumenal. N-linked (GlcNAc...) asparagine glycosylation is present at asparagine 99. Residues 127-133 (PKVGNTQ) and 189-197 (RDPFERLIS) each bind 3'-phosphoadenylyl sulfate. 2 N-linked (GlcNAc...) asparagine glycosylation sites follow: asparagine 228 and asparagine 316.

Belongs to the sulfotransferase 2 family.

The protein localises to the golgi apparatus membrane. It catalyses the reaction 3-O-{beta-D-GlcA-(1-&gt;[3)-alpha-D-Xyl-(1-&gt;3)-beta-D-GlcA-(1-&gt;](n)-4)-beta-D-Xyl-(1-&gt;4)-Rib-ol-P-Rib-ol-P-3-beta-D-GalNAc-(1-&gt;3)-beta-D-GlcNAc-(1-&gt;4)-O-6-P-alpha-D-Man}-L-Thr-[protein] + 3'-phosphoadenylyl sulfate = 3-O-{O-3-S-beta-D-GlcA-(1-&gt;[3)-alpha-D-Xyl-(1-&gt;3)-beta-D-GlcA-(1-&gt;](n)-4)-beta-D-Xyl-(1-&gt;4)-Rib-ol-P-Rib-ol-P-3-beta-D-GalNAc-(1-&gt;3)-beta-D-GlcNAc-(1-&gt;4)-O-6-P-alpha-D-Man}-L-Thr-[protein] + adenosine 3',5'-bisphosphate + H(+). The catalysed reaction is 17beta-estradiol 3-O-(beta-D-glucuronate) + 3'-phosphoadenylyl sulfate = 17beta-estradiol 3-O-(3-sulfo-beta-D-glucuronate) + adenosine 3',5'-bisphosphate + H(+). It carries out the reaction 17beta-estradiol 3-O-(beta-D-glucuronate) 17-sulfate + 3'-phosphoadenylyl sulfate = 17beta-estradiol 3-O-(3-sulfo-beta-D-glucuronate) 17-sulfate + adenosine 3',5'-bisphosphate + H(+). The enzyme catalyses 17beta-estradiol 17-O-(beta-D-glucuronate) + 3'-phosphoadenylyl sulfate = 17beta-estradiol 17-O-(3-sulfo-beta-D-glucuronate) + adenosine 3',5'-bisphosphate + H(+). It catalyses the reaction 16alpha,17beta-estriol 3-O-(beta-D-glucuronate) + 3'-phosphoadenylyl sulfate = 16alpha,17beta-estriol 3-O-(3-sulfo-beta-D-glucuronate) + adenosine 3',5'-bisphosphate + H(+). The catalysed reaction is 16alpha,17beta-estriol 16-O-(beta-D-glucuronate) + 3'-phosphoadenylyl sulfate = 16alpha,17beta-estriol 16-O-(3-sulfo-beta-D-glucuronate) + adenosine 3',5'-bisphosphate + H(+). It carries out the reaction 16alpha,17beta-estriol 17-O-(beta-D-glucuronate) + 3'-phosphoadenylyl sulfate = 16alpha,17beta-estriol 17-O-(3-sulfo-beta-D-glucuronate) + adenosine 3',5'-bisphosphate + H(+). The enzyme catalyses estrone 3-O-(beta-D-glucuronate) + 3'-phosphoadenylyl sulfate = estrone 3-O-(3-sulfo-beta-D-glucuronate) + adenosine 3',5'-bisphosphate + H(+). It catalyses the reaction 3alpha,20alpha-dihydroxy-5beta-pregnane 3-O-(beta-D-glucuronate) + 3'-phosphoadenylyl sulfate = 3alpha,20alpha-dihydroxy-5beta-pregnane 3-O-(3-sulfo-beta-D-glucuronate) + adenosine 3',5'-bisphosphate + H(+). The catalysed reaction is testosterone 17-O-(beta-D-glucuronate) + 3'-phosphoadenylyl sulfate = testosterone 17-O-(3-sulfo-beta-D-glucuronate) + adenosine 3',5'-bisphosphate + H(+). It carries out the reaction 3beta-androst-5-en-17-one 3-O-(beta-D-glucuronate) + 3'-phosphoadenylyl sulfate = 3beta-androst-5-en-17-one 3-O-(3-sulfo-beta-D-glucuronate) + adenosine 3',5'-bisphosphate + H(+). The enzyme catalyses 3alpha,17alpha-dihydroxy-5beta-androstane-11-one-17beta-carboxylate 3-O-(beta-D-glucuronate) + 3'-phosphoadenylyl sulfate = 3alpha,17alpha-dihydroxy-5beta-androstane-11-one-17beta-carboxylate 3-O-(3-sulfo-beta-D-glucuronate) + adenosine 3',5'-bisphosphate + H(+). It catalyses the reaction 3alpha-hydroxyetiocholan-17-one 3-O-(beta-D-glucuronate) + 3'-phosphoadenylyl sulfate = 3alpha-hydroxyetiocholan-17-one 3-O-(3-sulfo-beta-D-glucuronate) + adenosine 3',5'-bisphosphate + H(+). The protein operates within steroid metabolism. It functions in the pathway protein modification; carbohydrate sulfation. Catalyzes the transfer of sulfate from 3'-phosphoadenylyl sulfate (PAPS) to position 3 of terminal glucuronic acid of both protein- and lipid-linked oligosaccharides. Participates in biosynthesis of HNK-1 carbohydrate structure 3-O-sulfo-beta-D-GlcA-(1-&gt;3)-beta-D-Gal-(1-&gt;4)-D-GlcNAc-R, a sulfated glucuronyl-lactosaminyl residue carried by many neural recognition molecules, which is involved in cell interactions during ontogenetic development and in synaptic plasticity in the adult. May be indirectly involved in synapse plasticity of the hippocampus, via its role in HNK-1 biosynthesis. Sulfates terminal glucuronyl residue of the laminin globular (LG)-domain binding epitope on DAG1/alpha-dystroglycan and prevents further polymerization by LARGE1 glycosyltransferase. Likely defines the chain length of LG epitope, conferring binding specificity to extracellular matrix components. Plays a role in down-regulating the steroid hormones. Sulfates glucuronidated estrogens and androgens with an impact in hormone cycle and fertility. Has a preference for glucuronyl moiety at the 3-hydroxyl group of a sterol ring rather than the 17-hydroxyl group, showing high catalytic efficiency for 17beta-estradiol 3-O-(beta-D-glucuronate) and dehydroepiandrosterone 3-O-(beta-D-glucuronate) hormones. In Pongo abelii (Sumatran orangutan), this protein is Carbohydrate sulfotransferase 10 (CHST10).